A 233-amino-acid polypeptide reads, in one-letter code: Small ribosomal subunit protein uS3 (233 aa).

The 69-residue stretch at 39-107 folds into the KH type-2 domain; it reads VRQYLNKELA…PAQINIAEVR (69 aa).

It belongs to the universal ribosomal protein uS3 family. Part of the 30S ribosomal subunit. Forms a tight complex with proteins S10 and S14.

Functionally, binds the lower part of the 30S subunit head. Binds mRNA in the 70S ribosome, positioning it for translation. The polypeptide is Small ribosomal subunit protein uS3 (Cronobacter sakazakii (strain ATCC BAA-894) (Enterobacter sakazakii)).